Reading from the N-terminus, the 372-residue chain is Aminomethyltransferase (372 aa).

The protein belongs to the GcvT family. As to quaternary structure, the glycine cleavage system is composed of four proteins: P, T, L and H.

The enzyme catalyses N(6)-[(R)-S(8)-aminomethyldihydrolipoyl]-L-lysyl-[protein] + (6S)-5,6,7,8-tetrahydrofolate = N(6)-[(R)-dihydrolipoyl]-L-lysyl-[protein] + (6R)-5,10-methylene-5,6,7,8-tetrahydrofolate + NH4(+). In terms of biological role, the glycine cleavage system catalyzes the degradation of glycine. The polypeptide is Aminomethyltransferase (Paraburkholderia phymatum (strain DSM 17167 / CIP 108236 / LMG 21445 / STM815) (Burkholderia phymatum)).